The chain runs to 339 residues: Phosphate acyltransferase (339 aa).

The protein belongs to the PlsX family. In terms of assembly, homodimer. Probably interacts with PlsY.

The protein localises to the cytoplasm. It catalyses the reaction a fatty acyl-[ACP] + phosphate = an acyl phosphate + holo-[ACP]. Its pathway is lipid metabolism; phospholipid metabolism. Functionally, catalyzes the reversible formation of acyl-phosphate (acyl-PO(4)) from acyl-[acyl-carrier-protein] (acyl-ACP). This enzyme utilizes acyl-ACP as fatty acyl donor, but not acyl-CoA. The sequence is that of Phosphate acyltransferase from Dechloromonas aromatica (strain RCB).